Consider the following 326-residue polypeptide: Undecaprenyl-phosphate 4-deoxy-4-formamido-L-arabinose transferase (326 aa).

At 1–235 (MFEIHPIKKV…TCLTTTPLRM (235 aa)) the chain is on the cytoplasmic side. The chain crosses the membrane as a helical span at residues 236 to 256 (LSLLGSIIATSGFSLAILLVV). The Periplasmic segment spans residues 257-269 (LRLAFGSQWSGEG). The helical transmembrane segment at 270–290 (VFMLFAVLFTFIGAQFIGMGL) threads the bilayer. Residues 291–326 (LGEYIGRIYNDVRARPRYFVQKVIRPASSIDIEENH) are Cytoplasmic-facing.

This sequence belongs to the glycosyltransferase 2 family.

The protein localises to the cell inner membrane. The enzyme catalyses UDP-4-deoxy-4-formamido-beta-L-arabinose + di-trans,octa-cis-undecaprenyl phosphate = 4-deoxy-4-formamido-alpha-L-arabinopyranosyl di-trans,octa-cis-undecaprenyl phosphate + UDP. It participates in glycolipid biosynthesis; 4-amino-4-deoxy-alpha-L-arabinose undecaprenyl phosphate biosynthesis; 4-amino-4-deoxy-alpha-L-arabinose undecaprenyl phosphate from UDP-4-deoxy-4-formamido-beta-L-arabinose and undecaprenyl phosphate: step 1/2. It functions in the pathway bacterial outer membrane biogenesis; lipopolysaccharide biosynthesis. In terms of biological role, catalyzes the transfer of 4-deoxy-4-formamido-L-arabinose from UDP to undecaprenyl phosphate. The modified arabinose is attached to lipid A and is required for resistance to polymyxin and cationic antimicrobial peptides. The chain is Undecaprenyl-phosphate 4-deoxy-4-formamido-L-arabinose transferase from Escherichia fergusonii (strain ATCC 35469 / DSM 13698 / CCUG 18766 / IAM 14443 / JCM 21226 / LMG 7866 / NBRC 102419 / NCTC 12128 / CDC 0568-73).